Reading from the N-terminus, the 526-residue chain is GMP synthase [glutamine-hydrolyzing] (526 aa).

The Glutamine amidotransferase type-1 domain maps to 4–202 (KILILDFGSQ…VHDICGCDQS (199 aa)). Cysteine 81 (nucleophile) is an active-site residue. Active-site residues include histidine 176 and glutamate 178. The GMPS ATP-PPase domain maps to 203–395 (WNMPDYVETA…LGLPHDMVYR (193 aa)). 230–236 (SGGVDSS) is an ATP binding site.

Homodimer.

It carries out the reaction XMP + L-glutamine + ATP + H2O = GMP + L-glutamate + AMP + diphosphate + 2 H(+). It participates in purine metabolism; GMP biosynthesis; GMP from XMP (L-Gln route): step 1/1. Its function is as follows. Catalyzes the synthesis of GMP from XMP. In Methylobacillus flagellatus (strain ATCC 51484 / DSM 6875 / VKM B-1610 / KT), this protein is GMP synthase [glutamine-hydrolyzing].